Consider the following 328-residue polypeptide: Tetraacyldisaccharide 4'-kinase (328 aa).

52–59 serves as a coordination point for ATP; it reads NAGGTGKT.

The protein belongs to the LpxK family.

The enzyme catalyses a lipid A disaccharide + ATP = a lipid IVA + ADP + H(+). It participates in glycolipid biosynthesis; lipid IV(A) biosynthesis; lipid IV(A) from (3R)-3-hydroxytetradecanoyl-[acyl-carrier-protein] and UDP-N-acetyl-alpha-D-glucosamine: step 6/6. Its function is as follows. Transfers the gamma-phosphate of ATP to the 4'-position of a tetraacyldisaccharide 1-phosphate intermediate (termed DS-1-P) to form tetraacyldisaccharide 1,4'-bis-phosphate (lipid IVA). The protein is Tetraacyldisaccharide 4'-kinase of Jannaschia sp. (strain CCS1).